A 685-amino-acid chain; its full sequence is Protein snwA (685 aa).

Disordered stretches follow at residues 1-62, 88-112, 347-573, and 605-685; these read MTSL…GYLP, RKGKSKSSNSNTSNMNGGGTTTSIV, LAED…DSIY, and AVSN…SKKR. 2 stretches are compositionally biased toward low complexity: residues 30–41 and 93–102; these read PQQQKQQQQQQQ and KSSNSNTSNM. Residues 194–360 form an SNW region; that stretch reads ATYIKYTPSN…VRNERSGIIQ (167 aa). The span at 370-381 shows a compositional bias: acidic residues; the sequence is DSDNDNDNDSSS. Basic and acidic residues predominate over residues 399–494; that stretch reads RSTERIPSRN…DRYSKRRSDS (96 aa). Residues 495–507 are compositionally biased toward acidic residues; sequence DSDSDSDSSDSED. Basic and acidic residues predominate over residues 508–556; that stretch reads ERVRRERKEKLERDKIRMEKKRELEREYRLEASGKKSKFNRDQDRDISE. The segment covering 618-631 has biased composition (polar residues); the sequence is EDNTSIQDVLSNSR. Residues 646–685 show a composition bias toward basic and acidic residues; that stretch reads PNKEFSGTDRSKDRTGPVAFEKEKKKSDDPFGFDDFSKKR.

Belongs to the SNW family. As to quaternary structure, interacts with cypE.

It is found in the nucleus. The polypeptide is Protein snwA (snwA) (Dictyostelium discoideum (Social amoeba)).